The following is a 335-amino-acid chain: Biotin synthase (335 aa).

The Radical SAM core domain occupies 46 to 274 (YDIQLASLFS…KSKIRLSAGR (229 aa)). Cysteine 61, cysteine 65, and cysteine 68 together coordinate [4Fe-4S] cluster. Residues cysteine 105, cysteine 137, cysteine 197, and arginine 269 each coordinate [2Fe-2S] cluster.

It belongs to the radical SAM superfamily. Biotin synthase family. As to quaternary structure, homodimer. [4Fe-4S] cluster is required as a cofactor. It depends on [2Fe-2S] cluster as a cofactor.

It carries out the reaction (4R,5S)-dethiobiotin + (sulfur carrier)-SH + 2 reduced [2Fe-2S]-[ferredoxin] + 2 S-adenosyl-L-methionine = (sulfur carrier)-H + biotin + 2 5'-deoxyadenosine + 2 L-methionine + 2 oxidized [2Fe-2S]-[ferredoxin]. Its pathway is cofactor biosynthesis; biotin biosynthesis; biotin from 7,8-diaminononanoate: step 2/2. Its function is as follows. Catalyzes the conversion of dethiobiotin (DTB) to biotin by the insertion of a sulfur atom into dethiobiotin via a radical-based mechanism. The sequence is that of Biotin synthase from Prochlorococcus marinus (strain MIT 9215).